The following is a 218-amino-acid chain: uncharacterized protein (218 aa).

This is an uncharacterized protein from Acanthamoeba polyphaga (Amoeba).